The primary structure comprises 497 residues: tRNA-2-methylthio-N(6)-dimethylallyladenosine synthase (497 aa).

Positions 1–50 (MTGTSNIPTHGKEHKDAPALLPLPAPNPHHTHAAHPGNPSHDRPPSRGKL) are disordered. The MTTase N-terminal domain occupies 48-165 (GKLFIKTHGC…LPDMIRARRE (118 aa)). [4Fe-4S] cluster-binding residues include Cys-57, Cys-94, Cys-128, Cys-202, Cys-206, and Cys-209. A Radical SAM core domain is found at 188–430 (RAEGPSAFVS…QKHINTYAAD (243 aa)). The TRAM domain maps to 433 to 496 (KRMIGTVQTV…SNSLRGRVHT (64 aa)).

This sequence belongs to the methylthiotransferase family. MiaB subfamily. In terms of assembly, monomer. [4Fe-4S] cluster serves as cofactor.

It is found in the cytoplasm. The catalysed reaction is N(6)-dimethylallyladenosine(37) in tRNA + (sulfur carrier)-SH + AH2 + 2 S-adenosyl-L-methionine = 2-methylsulfanyl-N(6)-dimethylallyladenosine(37) in tRNA + (sulfur carrier)-H + 5'-deoxyadenosine + L-methionine + A + S-adenosyl-L-homocysteine + 2 H(+). In terms of biological role, catalyzes the methylthiolation of N6-(dimethylallyl)adenosine (i(6)A), leading to the formation of 2-methylthio-N6-(dimethylallyl)adenosine (ms(2)i(6)A) at position 37 in tRNAs that read codons beginning with uridine. This chain is tRNA-2-methylthio-N(6)-dimethylallyladenosine synthase, found in Xylella fastidiosa (strain 9a5c).